Here is a 353-residue protein sequence, read N- to C-terminus: Trans-enoyl reductase fsa3 (353 aa).

45-48 (VDTK) provides a ligand contact to NADP(+). 131 to 138 (ISFMTTGL) contributes to the substrate binding site. Residues 166-169 (SSAT), 189-192 (SPRN), Tyr-207, and 254-255 (LE) each bind NADP(+). 275 to 279 (GPQML) lines the substrate pocket. 344-345 (IS) contributes to the NADP(+) binding site.

This sequence belongs to the zinc-containing alcohol dehydrogenase family. In terms of assembly, monomer.

The enzyme catalyses L-serine + 7 malonyl-CoA + acetyl-CoA + 2 S-adenosyl-L-methionine + ATP + 8 NADPH + 11 H(+) = (5S)-3-[(2E,6R,8E,10E,12E)-2,6-dimethyltetradeca-2,8,10,12-tetraenoyl]-5-(hydroxymethyl)pyrrolidine-2,4-dione + AMP + 2 S-adenosyl-L-homocysteine + 7 CO2 + diphosphate + 8 NADP(+) + 8 CoA + 6 H2O. The protein operates within mycotoxin biosynthesis. Functionally, trans-enoyl reductase; part of the gene cluster that mediates the biosynthesis of HIV-1 integrase inhibitor equisetin and of fusarisetin A, both trans-fused decalin-containing tetramic acids showing also antimicrobial activity. The PKS module of fsa1 together with the enoylreductase fsa3 catalyze the formation of the polyketide unit which is then conjugated to L-serine by the condensation domain of the fsa1 NRPS module. Activity of the Dieckmann cyclase domain (RED) results in release of the Dieckmann product intermediate. Diels-Alderase fsa2 is involved in endo-selective Diels-Alder cycloaddition to form the decalin ring, leading to the production of N-desmethylequisetin also called trichosetin. Subsequent N-methylation is carried out by fsa4 to give equisetin. The enzymatic gene responsible for the conversion of equisetin to fusarisetin A has not been identified yet and is probably located outside of the fsa cluster. In Fusarium sp. (strain FN080326), this protein is Trans-enoyl reductase fsa3.